The following is a 912-amino-acid chain: Metabotropic glutamate receptor 4 (912 aa).

The signal sequence occupies residues M1–G32. Over K33–P586 the chain is Extracellular. A disulfide bond links C67 and C109. N98 carries an N-linked (GlcNAc...) asparagine glycan. L-glutamate contacts are provided by residues S159, A180 to T182, and Y230. 7 disulfide bridges follow: C249–C538, C372–C388, C428–C435, C520–C539, C524–C542, C545–C557, and C560–C573. N301 is a glycosylation site (N-linked (GlcNAc...) asparagine). D312 serves as a coordination point for L-glutamate. An L-glutamate-binding site is contributed by K405. Residues W587–V607 traverse the membrane as a helical segment. Residues T608 to E624 are Cytoplasmic-facing. Residues L625–A645 traverse the membrane as a helical segment. The Extracellular segment spans residues E646–S653. The chain crosses the membrane as a helical span at residues L654–L671. Residues T672–Q699 lie on the Cytoplasmic side of the membrane. Residues L700–V720 traverse the membrane as a helical segment. Over D721–L751 the chain is Extracellular. A helical membrane pass occupies residues S752–I772. Topologically, residues K773 to P786 are cytoplasmic. The chain crosses the membrane as a helical span at residues I787–G807. Residues T808 to V826 lie on the Extracellular side of the membrane. A helical transmembrane segment spans residues S827 to F847. Over H848–I912 the chain is Cytoplasmic.

This sequence belongs to the G-protein coupled receptor 3 family. Interacts with PICK1.

The protein localises to the cell membrane. Its function is as follows. G-protein coupled receptor for glutamate. Ligand binding causes a conformation change that triggers signaling via guanine nucleotide-binding proteins (G proteins) and modulates the activity of down-stream effectors. Signaling inhibits adenylate cyclase activity. The protein is Metabotropic glutamate receptor 4 (Grm4) of Mus musculus (Mouse).